Consider the following 309-residue polypeptide: tRNA dimethylallyltransferase (309 aa).

An ATP-binding site is contributed by 15-22 (GPTASGKS). 17–22 (TASGKS) lines the substrate pocket. The segment at 40–43 (DSRQ) is interaction with substrate tRNA.

Belongs to the IPP transferase family. Monomer. Requires Mg(2+) as cofactor.

It catalyses the reaction adenosine(37) in tRNA + dimethylallyl diphosphate = N(6)-dimethylallyladenosine(37) in tRNA + diphosphate. In terms of biological role, catalyzes the transfer of a dimethylallyl group onto the adenine at position 37 in tRNAs that read codons beginning with uridine, leading to the formation of N6-(dimethylallyl)adenosine (i(6)A). This is tRNA dimethylallyltransferase from Chlorobium phaeovibrioides (strain DSM 265 / 1930) (Prosthecochloris vibrioformis (strain DSM 265)).